The chain runs to 32 residues: Cytochrome b6-f complex subunit 7 (32 aa).

The chain crosses the membrane as a helical span at residues 5 to 25 (IFTVAGVMWALVLTGLSVGFG).

Belongs to the PetM family. As to quaternary structure, the 4 large subunits of the cytochrome b6-f complex are cytochrome b6, subunit IV (17 kDa polypeptide, PetD), cytochrome f and the Rieske protein, while the 4 small subunits are PetG, PetL, PetM and PetN. The complex functions as a dimer.

It localises to the plastid. It is found in the chloroplast thylakoid membrane. Component of the cytochrome b6-f complex, which mediates electron transfer between photosystem II (PSII) and photosystem I (PSI), cyclic electron flow around PSI, and state transitions. This is Cytochrome b6-f complex subunit 7 from Emiliania huxleyi (Coccolithophore).